A 160-amino-acid polypeptide reads, in one-letter code: Inorganic pyrophosphatase (160 aa).

Substrate contacts are provided by K16, R28, and Y40. Mg(2+) is bound by residues D50, D55, and D87. Y126 is a binding site for substrate.

It belongs to the PPase family. As to quaternary structure, homohexamer. Mg(2+) serves as cofactor.

The protein resides in the cytoplasm. The catalysed reaction is diphosphate + H2O = 2 phosphate + H(+). Its function is as follows. Catalyzes the hydrolysis of inorganic pyrophosphate (PPi) forming two phosphate ions. In Nanoarchaeum equitans (strain Kin4-M), this protein is Inorganic pyrophosphatase.